The chain runs to 147 residues: Large ribosomal subunit protein uL15 (147 aa).

Positions 1-65 (MQLHELKPAP…PLQRRLPKRG (65 aa)) are disordered. Gly residues-rich tracts occupy residues 21 to 31 (QGIGSGLGKTA) and 42 to 52 (SGGGVRPGFEG).

It belongs to the universal ribosomal protein uL15 family. In terms of assembly, part of the 50S ribosomal subunit.

In terms of biological role, binds to the 23S rRNA. This chain is Large ribosomal subunit protein uL15, found in Heliobacterium modesticaldum (strain ATCC 51547 / Ice1).